We begin with the raw amino-acid sequence, 580 residues long: 2-hydroxyacyl-CoA lyase 1 (580 aa).

E47 serves as a coordination point for thiamine diphosphate. A thiamine pyrophosphate binding region spans residues 413 to 494; that stretch reads TMDIGRLCIP…FIVLNNNGVY (82 aa). Residues D463 and N490 each contribute to the Mg(2+) site.

It belongs to the TPP enzyme family. Homotetramer. Mg(2+) serves as cofactor. It depends on thiamine diphosphate as a cofactor.

The protein localises to the peroxisome. It catalyses the reaction a 2-hydroxy-3-methyl fatty acyl-CoA = a 2-methyl-branched fatty aldehyde + formyl-CoA. The catalysed reaction is an (R)-2-hydroxy-long-chain-fatty acyl-CoA = a long-chain fatty aldehyde + formyl-CoA. The enzyme catalyses 2-hydroxy-3-methylhexadecanoyl-CoA = 2-methylpentadecanal + formyl-CoA. It carries out the reaction 2-hydroxyoctadecanoyl-CoA = heptadecanal + formyl-CoA. In terms of biological role, peroxisomal 2-OH acyl-CoA lyase involved in the cleavage (C1 removal) reaction in the fatty acid alpha-oxydation in a thiamine pyrophosphate (TPP)-dependent manner. Involved in the degradation of 3-methyl-branched fatty acids and the shortening of 2-hydroxy long-chain fatty acids. The sequence is that of 2-hydroxyacyl-CoA lyase 1 (hacl1) from Dictyostelium discoideum (Social amoeba).